The sequence spans 192 residues: CASP-like protein 4C1 (192 aa).

Positions 1–11 (MRSPQSLRNGE) are enriched in polar residues. The segment at 1-23 (MRSPQSLRNGETPSPSPRPPRFP) is disordered. The Cytoplasmic portion of the chain corresponds to 1–40 (MRSPQSLRNGETPSPSPRPPRFPTPHFHSTVSLQKLKRFN). Residues 14-23 (SPSPRPPRFP) are compositionally biased toward pro residues. A helical transmembrane segment spans residues 41 to 61 (LLILVFRLSTFCFSLASSVFM). The Extracellular segment spans residues 62–75 (LTNPTWYHFDAFRY). The helical transmembrane segment at 76-96 (VFAANAIVAIYSLFEMAASVW) threads the bilayer. The Cytoplasmic segment spans residues 97-107 (EISRGNTLFPE). Residues 108-128 (ILQVWFDFGHDQVFAYLLLSA) traverse the membrane as a helical segment. Topologically, residues 129 to 156 (DSAATALAKTLKGGDTCAASNAFCVQSY) are extracellular. The helical transmembrane segment at 157 to 177 (IAIALGFAGFLFLGLSSLLSG) threads the bilayer. Residues 178 to 192 (FRVVCFLINGSRFYV) are Cytoplasmic-facing.

The protein belongs to the Casparian strip membrane proteins (CASP) family. As to quaternary structure, homodimer and heterodimers.

The protein resides in the cell membrane. The protein is CASP-like protein 4C1 of Ricinus communis (Castor bean).